The following is a 230-amino-acid chain: Magnesium-protoporphyrin O-methyltransferase (230 aa).

This sequence belongs to the class I-like SAM-binding methyltransferase superfamily. Magnesium protoporphyrin O-methyltransferase family.

It catalyses the reaction Mg-protoporphyrin IX + S-adenosyl-L-methionine = Mg-protoporphyrin IX 13-monomethyl ester + S-adenosyl-L-homocysteine. Its pathway is porphyrin-containing compound metabolism; chlorophyll biosynthesis (light-independent). Converts Mg-protoporphyrin IX to Mg-protoporphyrin IX methylester using S-adenosyl-L-methionine as a cofactor. The polypeptide is Magnesium-protoporphyrin O-methyltransferase (chlM) (Synechocystis sp. (strain ATCC 27184 / PCC 6803 / Kazusa)).